A 634-amino-acid chain; its full sequence is Putative ABC transporter ATP-binding protein MG015 homolog (634 aa).

The next 6 membrane-spanning stretches (helical) occupy residues 54–74, 111–131, 189–209, 213–233, 296–316, and 325–345; these read VLYV…NSIL, LTIV…FNVA, VGGQ…ILFV, VIAL…FLFL, VFIY…SISI, and IPSF…IAAL. One can recognise an ABC transmembrane type-1 domain in the interval 54–364; sequence VLYVMVCAIF…IFSLWNLIQL (311 aa). One can recognise an ABC transporter domain in the interval 397 to 631; sequence IRFEKVVFGY…NGFYARLKRS (235 aa). Residue 430 to 437 participates in ATP binding; that stretch reads GPTGAGKS.

Belongs to the ABC transporter superfamily.

It is found in the cell membrane. The chain is Putative ABC transporter ATP-binding protein MG015 homolog from Mycoplasma pneumoniae (strain ATCC 29342 / M129 / Subtype 1) (Mycoplasmoides pneumoniae).